The chain runs to 256 residues: Protein N-terminal and lysine N-methyltransferase EFM7 (256 aa).

The disordered stretch occupies residues 1-26 (MSDTESLNDALGLFDEPEDFRPEKPK). Residues Trp64, 90-92 (GAA), Asp112, Trp145, and Ser168 contribute to the S-adenosyl-L-methionine site.

The protein belongs to the class I-like SAM-binding methyltransferase superfamily. EFM7 family.

Its subcellular location is the cytoplasm. S-adenosyl-L-methionine-dependent protein methyltransferase that trimethylates the N-terminal glycine 'Gly-2' of elongation factor 1-alpha, before also catalyzing the mono- and dimethylation of 'Lys-3'. The sequence is that of Protein N-terminal and lysine N-methyltransferase EFM7 from Candida glabrata (strain ATCC 2001 / BCRC 20586 / JCM 3761 / NBRC 0622 / NRRL Y-65 / CBS 138) (Yeast).